The chain runs to 255 residues: uncharacterized protein (255 aa).

The 56-residue stretch at P3–S58 folds into the HTH deoR-type domain. A DNA-binding region (H-T-H motif) is located at residues V20 to D39.

This is an uncharacterized protein from Escherichia coli (strain K12).